Here is a 63-residue protein sequence, read N- to C-terminus: Large ribosomal subunit protein bL32 (63 aa).

Over residues 1–16 (MAVPKRKTSRMKRGFR) the composition is skewed to basic residues. Positions 1–22 (MAVPKRKTSRMKRGFRRSADAI) are disordered.

Belongs to the bacterial ribosomal protein bL32 family.

The sequence is that of Large ribosomal subunit protein bL32 from Beijerinckia indica subsp. indica (strain ATCC 9039 / DSM 1715 / NCIMB 8712).